A 321-amino-acid chain; its full sequence is MFIMHHNSVLLHEAINALNINPSGIYIDGTFGLGGHSHYILSKLTSHGRLIAMDRDWSAVNIGEVLTKQDGRFSIIHAPFSKMLRCIYNMNLVGLINGILLDLGVCESQLTDSSRGFSFMRDGPLDMRMDNSVGQSAYEWIAKASQKDIEWVLRTFGEEKLSKKIARSIVLKREVYPIDRTSALSEIISDTVLYYNNRYNRRKHPATRSFLAIRIYINEELVEIMKILQDVFKLLAPGGRLVVISFNSLEDRIVKKFINQYSRVFAYPPKIPLTHTQLLHKYSGTMKFKNLGKIKPTVLEIKKNIRARSAILRYAEKLIYM.

Residues 34–36, Asp54, Phe80, Asp102, and Gln109 contribute to the S-adenosyl-L-methionine site; that span reads GGH.

It belongs to the methyltransferase superfamily. RsmH family.

It is found in the cytoplasm. The enzyme catalyses cytidine(1402) in 16S rRNA + S-adenosyl-L-methionine = N(4)-methylcytidine(1402) in 16S rRNA + S-adenosyl-L-homocysteine + H(+). In terms of biological role, specifically methylates the N4 position of cytidine in position 1402 (C1402) of 16S rRNA. The protein is Ribosomal RNA small subunit methyltransferase H of Blochmanniella floridana.